Here is a 453-residue protein sequence, read N- to C-terminus: Histidine--tRNA ligase (453 aa).

Belongs to the class-II aminoacyl-tRNA synthetase family. As to quaternary structure, homodimer.

It is found in the cytoplasm. The catalysed reaction is tRNA(His) + L-histidine + ATP = L-histidyl-tRNA(His) + AMP + diphosphate + H(+). In Cytophaga hutchinsonii (strain ATCC 33406 / DSM 1761 / CIP 103989 / NBRC 15051 / NCIMB 9469 / D465), this protein is Histidine--tRNA ligase.